The chain runs to 343 residues: Ferredoxin--NADP reductase (343 aa).

Residues Asp-31, Lys-39, Tyr-43, Val-83, Ile-118, Asp-285, and Ser-326 each contribute to the FAD site.

It belongs to the ferredoxin--NADP reductase type 2 family. As to quaternary structure, homodimer. FAD serves as cofactor.

The enzyme catalyses 2 reduced [2Fe-2S]-[ferredoxin] + NADP(+) + H(+) = 2 oxidized [2Fe-2S]-[ferredoxin] + NADPH. This is Ferredoxin--NADP reductase from Staphylococcus saprophyticus subsp. saprophyticus (strain ATCC 15305 / DSM 20229 / NCIMB 8711 / NCTC 7292 / S-41).